The sequence spans 397 residues: MKILVVNCGSSSLKYQLIDMTSEEALAKGLVERIGIEGSILTQKVNGEKYIIEEPMKDHKKAIELVLKALVDKEHGVISDMSEIAAVGHRVVHGGEKYASSVLIDDEVMKALEDCVKLAPLHNPPNIIGINACRELMPKTPMVAVFDTAFHQTLPDYAYMYPLPYELYEQNGIRKYGFHGTSHRYVSSVASEMMGKDLKDLKVITCHLGNGASLCAVKEGKSVETSMGFTPLAGLAMGTRCGDIDPAILLFMERELKMSPDEVDTVINKKSGVLGISGVSSDFRDIEGAAEEGNKRAKLALDVYHYTVRQTIGAYTAVLNGVDAIVFTAGLGENSAASREEILNGLEYLGIKIDAEKNKQRGKQIEISTEDSKVKVFVIPTDEELMIARDTKEITAK.

Asparagine 7 contacts Mg(2+). Lysine 14 serves as a coordination point for ATP. Arginine 90 is a substrate binding site. Aspartate 147 functions as the Proton donor/acceptor in the catalytic mechanism. ATP contacts are provided by residues 207 to 211, 282 to 284, and 330 to 334; these read HLGNG, DFR, and GLGEN. Glutamate 383 serves as a coordination point for Mg(2+).

Belongs to the acetokinase family. In terms of assembly, homodimer. Requires Mg(2+) as cofactor. The cofactor is Mn(2+).

Its subcellular location is the cytoplasm. The catalysed reaction is acetate + ATP = acetyl phosphate + ADP. Its pathway is metabolic intermediate biosynthesis; acetyl-CoA biosynthesis; acetyl-CoA from acetate: step 1/2. Its function is as follows. Catalyzes the formation of acetyl phosphate from acetate and ATP. Can also catalyze the reverse reaction. The polypeptide is Acetate kinase (Clostridium botulinum (strain Kyoto / Type A2)).